A 320-amino-acid chain; its full sequence is Probable protein adenylyltransferase aq_aa38 (320 aa).

The 131-residue stretch at valine 76–arginine 206 folds into the Fido domain. ATP contacts are provided by residues lysine 100–serine 101, glycine 157–glycine 159, and arginine 163.

It belongs to the fic family.

The catalysed reaction is L-tyrosyl-[protein] + ATP = O-(5'-adenylyl)-L-tyrosyl-[protein] + diphosphate. The enzyme catalyses L-threonyl-[protein] + ATP = 3-O-(5'-adenylyl)-L-threonyl-[protein] + diphosphate. Its function is as follows. Probable adenylyltransferase that mediates the addition of adenosine 5'-monophosphate (AMP) to specific residues of target proteins. This chain is Probable protein adenylyltransferase aq_aa38, found in Aquifex aeolicus (strain VF5).